We begin with the raw amino-acid sequence, 306 residues long: tRNA dimethylallyltransferase (306 aa).

An ATP-binding site is contributed by 13–20 (GPTGAGKT). 15 to 20 (TGAGKT) contacts substrate. Interaction with substrate tRNA regions lie at residues 38–41 (DSRQ) and 161–165 (QRNAR).

This sequence belongs to the IPP transferase family. Monomer. The cofactor is Mg(2+).

The enzyme catalyses adenosine(37) in tRNA + dimethylallyl diphosphate = N(6)-dimethylallyladenosine(37) in tRNA + diphosphate. Catalyzes the transfer of a dimethylallyl group onto the adenine at position 37 in tRNAs that read codons beginning with uridine, leading to the formation of N6-(dimethylallyl)adenosine (i(6)A). The sequence is that of tRNA dimethylallyltransferase from Maridesulfovibrio salexigens (strain ATCC 14822 / DSM 2638 / NCIMB 8403 / VKM B-1763) (Desulfovibrio salexigens).